We begin with the raw amino-acid sequence, 93 residues long: Secretoglobin family 3A member 2 (93 aa).

Positions 1–21 (MKLVTIFLLVTISLCSYSATA) are cleaved as a signal peptide.

Belongs to the secretoglobin family. UGRP subfamily. As to quaternary structure, homodimer; disulfide-linked. Monomer. Interacts with APOA1. Highly expressed in lung and trachea. Detected throughout the airway epithelium in lung, with slightly higher expression in large airways. Found in lung submucosal gland acinus where it localizes to serous-like cells. Probably expressed in club cells of the bronchioles. Not detected in other tissues tested.

The protein resides in the secreted. Functionally, secreted cytokine-like protein. Binds to the scavenger receptor MARCO. Can also bind to pathogens including the Gram-positive bacterium L.monocytogenes, the Gram-negative bacterium P.aeruginosa, and yeast. Strongly inhibits phospholipase A2 (PLA2G1B) activity. Seems to have anti-inflammatory effects in respiratory epithelium. Also has anti-fibrotic activity in lung. May play a role in fetal lung development and maturation. Promotes branching morphogenesis during early stages of lung development. In the pituitary, may inhibit production of follicle-stimulating hormone (FSH) and luteinizing hormone (LH). This chain is Secretoglobin family 3A member 2 (SCGB3A2), found in Homo sapiens (Human).